Reading from the N-terminus, the 573-residue chain is Putative ABC transporter ATP-binding protein LJ_1704 (573 aa).

2 consecutive ABC transporter domains span residues 6–247 (IEFK…GVRE) and 303–536 (LKLD…ASLK). ATP contacts are provided by residues 40 to 47 (GPSGSGKS) and 337 to 344 (GQNGAGKT).

It belongs to the ABC transporter superfamily.

The protein resides in the cell membrane. In terms of biological role, probably part of an ABC transporter complex. Responsible for energy coupling to the transport system. This chain is Putative ABC transporter ATP-binding protein LJ_1704, found in Lactobacillus johnsonii (strain CNCM I-12250 / La1 / NCC 533).